Here is a 206-residue protein sequence, read N- to C-terminus: dITP/XTP pyrophosphatase (206 aa).

10-15 (SGNAGK) is a binding site for substrate. Mg(2+)-binding residues include Glu-40 and Asp-69. Catalysis depends on Asp-69, which acts as the Proton acceptor. Residues Ser-70, 148–151 (FGYD), Lys-171, and 176–177 (HR) each bind substrate.

This sequence belongs to the HAM1 NTPase family. Homodimer. Mg(2+) is required as a cofactor.

The enzyme catalyses XTP + H2O = XMP + diphosphate + H(+). The catalysed reaction is dITP + H2O = dIMP + diphosphate + H(+). It catalyses the reaction ITP + H2O = IMP + diphosphate + H(+). Its function is as follows. Pyrophosphatase that catalyzes the hydrolysis of nucleoside triphosphates to their monophosphate derivatives, with a high preference for the non-canonical purine nucleotides XTP (xanthosine triphosphate), dITP (deoxyinosine triphosphate) and ITP. Seems to function as a house-cleaning enzyme that removes non-canonical purine nucleotides from the nucleotide pool, thus preventing their incorporation into DNA/RNA and avoiding chromosomal lesions. The chain is dITP/XTP pyrophosphatase from Synechococcus sp. (strain CC9311).